The sequence spans 145 residues: MKLHELKYTEGSKKDVTRVGRGMASGKGKTSTRGHKGQNSRSGGGVRVGFEGGQTPLYRRLPKIGFTSPNQKEYVILNLSDLERLNLALIDHKVLVEQKIIKNEKQLVKVLGKGSITSAINVKLNKVSKSAQAEIEKLGGKVEVI.

Residues 1 to 18 (MKLHELKYTEGSKKDVTR) show a composition bias toward basic and acidic residues. Positions 1–51 (MKLHELKYTEGSKKDVTRVGRGMASGKGKTSTRGHKGQNSRSGGGVRVGFE) are disordered. The span at 42–51 (SGGGVRVGFE) shows a compositional bias: gly residues.

The protein belongs to the universal ribosomal protein uL15 family. Part of the 50S ribosomal subunit.

Functionally, binds to the 23S rRNA. This Mesoplasma florum (strain ATCC 33453 / NBRC 100688 / NCTC 11704 / L1) (Acholeplasma florum) protein is Large ribosomal subunit protein uL15.